The primary structure comprises 678 residues: MNFSVLPPEINSALMFAGAGPGPMLAAASAWTGLAGDLGSAAASFSAVTSQLATGSWQGPASAAMTGVAASYARWLTTAAAQAEQAAGQAQAAVSAFEAALAATVHPGAVSANRGRLRSLVASNLLGQNAPAIAAVEAVYEQMWAADVAAMLGYHGEASAVALSLTPFTPSPSAAATPGGAVIIAGFPFLDLGNVTIGGFNLASGNLGLGNLGSFNPGSANTGSVNLGNANIGDLNLGSGNIGSYNLGGGNTGDLNPGSGNTGTLNWGSGNIGSYNLGGGNLGSYNLGSGNTGDTNFGGGNTGNLNVGGGNTGNSNFGFGNTGNVNFGNGNTGDTNFGSGNLGSGNIGFGNKGSHNIGFGNSGNNNIGFGLTGDNQIGFGALNSGSGNLGFGNSGNGNIGFFNSGNNNIGMGNSGNGVGALSVEFGSSAERSSGFGNSGELSTGIGNSGQLSTGWFNSATTSTGWFNSGTTNTGWFNSGTTNTGIGNSGGNLVTGSMGLFNSGHTNTGSFNAGSMNTGDFNSGNVNTGYFNSGNINTGFFNSGDLNTGLFNSVNQPVQNSGWLHTGTNNSGYANAGTFNSGFDNNARDEHAEFVTGNSGLANVGNYNAGIINVGDHLSGFRNSVPTITGTANISGFVNAGTSISGFFNFGSLMSGFANFDDEVSGYLNGDSRASGWIH.

A run of 2 helical transmembrane segments spans residues 14 to 34 (LMFA…WTGL) and 180 to 200 (GAVI…IGGF).

It belongs to the mycobacterial PPE family.

It localises to the cell membrane. This is an uncharacterized protein from Mycobacterium tuberculosis (strain CDC 1551 / Oshkosh).